We begin with the raw amino-acid sequence, 387 residues long: Succinate--CoA ligase [ADP-forming] subunit beta (387 aa).

The ATP-grasp domain maps to 9-244 (KQLFASYGLP…VSQEDDRENR (236 aa)). Residues Lys46, 53–55 (GRG), Glu99, Cys102, and Glu107 contribute to the ATP site. Asn199 and Asp213 together coordinate Mg(2+). Substrate contacts are provided by residues Asn264 and 321–323 (GIV).

Belongs to the succinate/malate CoA ligase beta subunit family. In terms of assembly, heterotetramer of two alpha and two beta subunits. Mg(2+) is required as a cofactor.

It carries out the reaction succinate + ATP + CoA = succinyl-CoA + ADP + phosphate. The enzyme catalyses GTP + succinate + CoA = succinyl-CoA + GDP + phosphate. It participates in carbohydrate metabolism; tricarboxylic acid cycle; succinate from succinyl-CoA (ligase route): step 1/1. Its function is as follows. Succinyl-CoA synthetase functions in the citric acid cycle (TCA), coupling the hydrolysis of succinyl-CoA to the synthesis of either ATP or GTP and thus represents the only step of substrate-level phosphorylation in the TCA. The beta subunit provides nucleotide specificity of the enzyme and binds the substrate succinate, while the binding sites for coenzyme A and phosphate are found in the alpha subunit. This is Succinate--CoA ligase [ADP-forming] subunit beta from Legionella pneumophila (strain Paris).